Consider the following 542-residue polypeptide: Malolactic enzyme (542 aa).

Residue Tyr-92 is the Proton donor of the active site. Lys-165 serves as the catalytic Proton acceptor. Lys-165 is a substrate binding site. 3 residues coordinate Mn(2+): Glu-236, Asp-237, and Asp-260. Residues 293-296, Asn-405, and Asn-450 contribute to the NAD(+) site; that span reads AGTA. Asn-450 contributes to the substrate binding site.

It belongs to the malic enzymes family. Homodimer. Mn(2+) serves as cofactor. NAD(+) is required as a cofactor.

The catalysed reaction is (S)-malate + H(+) = (S)-lactate + CO2. Oxamate, fructose-1,6-diphosphate and L-lactate act as non-competitive inhibitors, whereas succinate, citrate and tartrate isomers produce a competitive inhibition. In terms of biological role, involved in the malolactic fermentation (MLF) of wine, which results in a natural decrease in acidity and favorable changes in wine flavors. Catalyzes the decarboxylation of L-malate to L-lactate. In Leuconostoc mesenteroides, this protein is Malolactic enzyme (mleS).